The sequence spans 478 residues: Serine hydroxymethyltransferase, cytosolic (478 aa).

N6-(pyridoxal phosphate)lysine is present on Lys-251.

It belongs to the SHMT family. Homotetramer. Identified in complex with FAM175B and the other subunits of the BRISC complex, at least composed of FAM175B/ABRO1, BRCC3/BRCC36, BABAM2 and BABAM1/NBA1. Pyridoxal 5'-phosphate is required as a cofactor.

It localises to the cytoplasm. The enzyme catalyses (6R)-5,10-methylene-5,6,7,8-tetrahydrofolate + glycine + H2O = (6S)-5,6,7,8-tetrahydrofolate + L-serine. It functions in the pathway one-carbon metabolism; tetrahydrofolate interconversion. Functionally, interconversion of serine and glycine. The protein is Serine hydroxymethyltransferase, cytosolic (Shmt1) of Mus musculus (Mouse).